A 928-amino-acid polypeptide reads, in one-letter code: Zinc metalloproteinase nas-39 (928 aa).

Positions 1–30 (MRFSANIAIIVNIIFLFIVVEFVLPTFIRS) are cleaved as a signal peptide. A Peptidase M12A domain is found at 48 to 247 (AATAKKERIW…RQTKKLYKCA (200 aa)). 2 N-linked (GlcNAc...) asparagine glycosylation sites follow: N69 and N87. 4 disulfide bridges follow: C90–C246, C111–C133, C113–C114, and C249–C268. H141 provides a ligand contact to Zn(2+). E142 is an active-site residue. Positions 145 and 151 each coordinate Zn(2+). 2 CUB domains span residues 249-359 (CGGT…YAIC) and 360-476 (GGPI…FTKE). Residue N283 is glycosylated (N-linked (GlcNAc...) asparagine). Disulfide bonds link C359–C385, C412–C439, C480–C491, C487–C500, C502–C515, and C519–C545. In terms of domain architecture, EGF-like 1; calcium-binding spans 477–516 (LNECATDKNICHHYCVNTVGGFKCACRVGYSLSSNGFSCD). In terms of domain architecture, CUB 3 spans 519 to 625 (CGGYLKASNG…DGFFANFIAD (107 aa)). N527 and N560 each carry an N-linked (GlcNAc...) asparagine glycan. Intrachain disulfides connect C573/C587, C629/C640, C636/C649, C651/C664, C669/C695, C722/C744, C782/C812, and C840/C863. One can recognise an EGF-like 2; calcium-binding domain in the interval 626 to 665 (FDECQNDNAGCEHTCQNRLGSYVCTCNPGYILAEDKHNCK). CUB domains lie at 669–781 (CFFE…YTSL) and 782–900 (CGGR…YREA). N-linked (GlcNAc...) asparagine glycosylation occurs at N694. The segment at 895–928 (AEYREAPRSSSTKRTFVSKTRHSPLEEPIHDRNE) is disordered. A compositionally biased stretch (polar residues) spans 902-912 (RSSSTKRTFVS). Over residues 917–928 (SPLEEPIHDRNE) the composition is skewed to basic and acidic residues.

It depends on Zn(2+) as a cofactor. In terms of tissue distribution, expressed in pharyngeal, vulva and body wall muscles, intestine and several neurons.

The protein localises to the secreted. Its function is as follows. Metalloprotease. This is Zinc metalloproteinase nas-39 from Caenorhabditis elegans.